The chain runs to 172 residues: Arginine repressor (172 aa).

It belongs to the ArgR family.

It localises to the cytoplasm. It participates in amino-acid biosynthesis; L-arginine biosynthesis [regulation]. Its function is as follows. Regulates arginine biosynthesis genes. In Bifidobacterium adolescentis (strain ATCC 15703 / DSM 20083 / NCTC 11814 / E194a), this protein is Arginine repressor.